We begin with the raw amino-acid sequence, 226 residues long: Regulator of microtubule dynamics protein 1 (226 aa).

This sequence belongs to the FAM82/RMD family. In terms of assembly, interacts with air-2.

The protein resides in the cytoplasm. Its subcellular location is the cytoskeleton. The protein localises to the spindle pole. Functionally, acts in chromosome segregation and organization during mitosis. The chain is Regulator of microtubule dynamics protein 1 (rmd-1) from Caenorhabditis elegans.